The following is a 428-amino-acid chain: Synaptotagmin-1 (428 aa).

Topologically, residues 1–67 (MDSLLARVKR…KDKLINEIEN (67 aa)) are vesicular. Residues 16-50 (ALNPAQEGVTGGPDAAGLPDVSTSSPGGGGAGDKL) are disordered. Residues 68 to 92 (LPIWAIVLIIAGSLLFLVCCVYCVC) form a helical membrane-spanning segment. The Cytoplasmic portion of the chain corresponds to 93 to 428 (RRSCRKRKKK…HTLQEVPEKN (336 aa)). At Ser123 the chain carries Phosphoserine; by PRKC2. Positions 147–395 (STKSEVKLGK…PIGRCVLGCN (249 aa)) are phospholipid binding. C2 domains are found at residues 153–272 (KLGK…EDWK) and 286–419 (KLGD…AQWH). Positions 184, 190, 242, 243, 244, 247, 248, 250, 317, 323, 377, and 379 each coordinate Ca(2+).

Belongs to the synaptotagmin family. In terms of assembly, binds SNAP25. Isoform 3 binds SNAP25 with higher affinity. Ca(2+) is required as a cofactor.

It is found in the cytoplasmic vesicle. The protein localises to the secretory vesicle. It localises to the synaptic vesicle membrane. The protein resides in the synapse. Acts as inhibitor of neurotransmitter release. Overexpression leads to a decrease in the amplitude of the excitatory postsynaptic potential in dissected cholinergic and glutaminergic neurons while depletion with antisense oligonucleotides leads to an increase. Overexpression of isoform 1 blocks the reversal of synaptic depression by serotonin in sensory neurons. The protein is Synaptotagmin-1 (SYT1) of Aplysia californica (California sea hare).